Consider the following 294-residue polypeptide: Diphthine synthase (294 aa).

S-adenosyl-L-methionine-binding positions include D93, V96, 121–122 (SG), L173, and A220.

This sequence belongs to the diphthine synthase family. As to quaternary structure, homodimer.

The catalysed reaction is 2-[(3S)-amino-3-carboxypropyl]-L-histidyl-[translation elongation factor 2] + 3 S-adenosyl-L-methionine = diphthine-[translation elongation factor 2] + 3 S-adenosyl-L-homocysteine + 3 H(+). It participates in protein modification; peptidyl-diphthamide biosynthesis. In terms of biological role, S-adenosyl-L-methionine-dependent methyltransferase that catalyzes the trimethylation of the amino group of the modified target histidine residue in translation elongation factor 2 (EF-2), to form an intermediate called diphthine. The three successive methylation reactions represent the second step of diphthamide biosynthesis. The polypeptide is Diphthine synthase (dphB) (Aeropyrum pernix (strain ATCC 700893 / DSM 11879 / JCM 9820 / NBRC 100138 / K1)).